The following is a 374-amino-acid chain: DNA replication and repair protein RecF (374 aa).

30-37 (GPNAQGKS) serves as a coordination point for ATP.

This sequence belongs to the RecF family.

The protein resides in the cytoplasm. Functionally, the RecF protein is involved in DNA metabolism; it is required for DNA replication and normal SOS inducibility. RecF binds preferentially to single-stranded, linear DNA. It also seems to bind ATP. This Acaryochloris marina (strain MBIC 11017) protein is DNA replication and repair protein RecF.